The primary structure comprises 235 residues: Hydroxyacylglutathione hydrolase (235 aa).

Residues His53, His55, Asp57, His58, His109, Asp127, and His165 each coordinate Zn(2+).

This sequence belongs to the metallo-beta-lactamase superfamily. Glyoxalase II family. In terms of assembly, monomer. The cofactor is Zn(2+).

It carries out the reaction an S-(2-hydroxyacyl)glutathione + H2O = a 2-hydroxy carboxylate + glutathione + H(+). The protein operates within secondary metabolite metabolism; methylglyoxal degradation; (R)-lactate from methylglyoxal: step 2/2. In terms of biological role, thiolesterase that catalyzes the hydrolysis of S-D-lactoyl-glutathione to form glutathione and D-lactic acid. The polypeptide is Hydroxyacylglutathione hydrolase (Glaesserella parasuis serovar 5 (strain SH0165) (Haemophilus parasuis)).